The chain runs to 353 residues: Photosystem II protein D1 (353 aa).

Thr-2 carries the post-translational modification N-acetylthreonine. The residue at position 2 (Thr-2) is a Phosphothreonine. 3 helical membrane-spanning segments follow: residues 29–46 (YIGW…TATS), 118–133 (HFLL…EWEL), and 142–156 (WIAV…AATA). Position 118 (His-118) interacts with chlorophyll a. Position 126 (Tyr-126) interacts with pheophytin a. [CaMn4O5] cluster is bound by residues Asp-170 and Glu-189. The helical transmembrane segment at 197–218 (FHMLGVAGVFGGSLFSAMHGSL) threads the bilayer. His-198 contacts chlorophyll a. A quinone contacts are provided by residues His-215 and 264-265 (SF). His-215 serves as a coordination point for Fe cation. His-272 is a Fe cation binding site. A helical membrane pass occupies residues 274-288 (FLAAWPVVGIWFTAL). Positions 332, 333, 342, and 344 each coordinate [CaMn4O5] cluster. The propeptide occupies 345–353 (AIEAPSTNG).

The protein belongs to the reaction center PufL/M/PsbA/D family. In terms of assembly, PSII is composed of 1 copy each of membrane proteins PsbA, PsbB, PsbC, PsbD, PsbE, PsbF, PsbH, PsbI, PsbJ, PsbK, PsbL, PsbM, PsbT, PsbX, PsbY, PsbZ, Psb30/Ycf12, at least 3 peripheral proteins of the oxygen-evolving complex and a large number of cofactors. It forms dimeric complexes. Requires The D1/D2 heterodimer binds P680, chlorophylls that are the primary electron donor of PSII, and subsequent electron acceptors. It shares a non-heme iron and each subunit binds pheophytin, quinone, additional chlorophylls, carotenoids and lipids. D1 provides most of the ligands for the Mn4-Ca-O5 cluster of the oxygen-evolving complex (OEC). There is also a Cl(-1) ion associated with D1 and D2, which is required for oxygen evolution. The PSII complex binds additional chlorophylls, carotenoids and specific lipids. as cofactor. Tyr-161 forms a radical intermediate that is referred to as redox-active TyrZ, YZ or Y-Z. In terms of processing, C-terminally processed by CTPA; processing is essential to allow assembly of the oxygen-evolving complex and thus photosynthetic growth.

It is found in the plastid. It localises to the chloroplast thylakoid membrane. The catalysed reaction is 2 a plastoquinone + 4 hnu + 2 H2O = 2 a plastoquinol + O2. Its function is as follows. Photosystem II (PSII) is a light-driven water:plastoquinone oxidoreductase that uses light energy to abstract electrons from H(2)O, generating O(2) and a proton gradient subsequently used for ATP formation. It consists of a core antenna complex that captures photons, and an electron transfer chain that converts photonic excitation into a charge separation. The D1/D2 (PsbA/PsbD) reaction center heterodimer binds P680, the primary electron donor of PSII as well as several subsequent electron acceptors. This Nicotiana debneyi (Debney's tobacco) protein is Photosystem II protein D1.